The primary structure comprises 191 residues: UPF0149 protein VC_2476 (191 aa).

The protein belongs to the UPF0149 family.

This chain is UPF0149 protein VC_2476, found in Vibrio cholerae serotype O1 (strain ATCC 39315 / El Tor Inaba N16961).